Consider the following 640-residue polypeptide: Putative solute carrier organic anion transporter family member 1B7 (640 aa).

Over Met-1–Ser-16 the chain is Extracellular. Residues Ser-17–Val-37 form a helical membrane-spanning segment. Residues Ser-38 to Leu-49 lie on the Cytoplasmic side of the membrane. A helical membrane pass occupies residues Ile-50–Phe-70. The Extracellular segment spans residues Met-71–Met-123. A helical membrane pass occupies residues Trp-124–Leu-144. At Gly-145–Ser-159 the chain is on the cytoplasmic side. A helical membrane pass occupies residues Leu-160–Gly-180. At Ser-181–Trp-211 the chain is on the extracellular side. The helical transmembrane segment at Trp-212–Leu-232 threads the bilayer. Residues Pro-233 to Val-292 are Cytoplasmic-facing. A Phosphoserine modification is found at Ser-246. The chain crosses the membrane as a helical span at residues Ile-293–Ile-313. At Lys-314–Phe-329 the chain is on the extracellular side. A helical transmembrane segment spans residues Leu-330–Ile-350. The Cytoplasmic portion of the chain corresponds to Lys-351 to Lys-362. Residues Leu-363–Cys-383 form a helical membrane-spanning segment. At Glu-384–Val-492 the chain is on the extracellular side. Residues Asp-406–Glu-461 form the Kazal-like domain. 3 cysteine pairs are disulfide-bonded: Cys-412/Cys-442, Cys-418/Cys-438, and Cys-427/Cys-459. The chain crosses the membrane as a helical span at residues Ile-493–Ile-513. Topologically, residues Arg-514–Lys-521 are cytoplasmic. A helical transmembrane segment spans residues Ala-522–Ile-542. Residues Tyr-543–Ala-577 are Extracellular-facing. Residues Phe-578–Phe-598 traverse the membrane as a helical segment. Residues Val-599–Gln-640 lie on the Cytoplasmic side of the membrane. Ser-636 carries the phosphoserine modification.

It belongs to the organo anion transporter (TC 2.A.60) family.

It is found in the cell membrane. This chain is Putative solute carrier organic anion transporter family member 1B7 (SLCO1B7), found in Homo sapiens (Human).